The primary structure comprises 276 residues: Large ribosomal subunit protein uL2 (276 aa).

Disordered regions lie at residues 36-55 (PLPRKAGRNNQGKLTVRHRG) and 219-276 (TVRG…GRKK). Basic residues predominate over residues 255–276 (LGKKTRKKKNRSNKLIVRGRKK).

This sequence belongs to the universal ribosomal protein uL2 family. As to quaternary structure, part of the 50S ribosomal subunit. Forms a bridge to the 30S subunit in the 70S ribosome.

Functionally, one of the primary rRNA binding proteins. Required for association of the 30S and 50S subunits to form the 70S ribosome, for tRNA binding and peptide bond formation. It has been suggested to have peptidyltransferase activity; this is somewhat controversial. Makes several contacts with the 16S rRNA in the 70S ribosome. This is Large ribosomal subunit protein uL2 from Macrococcus caseolyticus (strain JCSC5402) (Macrococcoides caseolyticum).